The following is a 433-amino-acid chain: Acetyl-CoA-benzylalcohol acetyltransferase (433 aa).

Residues His152 and Asp377 each act as proton acceptor in the active site.

It belongs to the plant acyltransferase family. In terms of processing, the N-terminus is blocked. Expressed in petals, style, sepals and stamens. Very low expression in stigma and not detected in leaves.

It catalyses the reaction benzyl alcohol + acetyl-CoA = benzyl acetate + CoA. It carries out the reaction (E)-cinnamyl alcohol + acetyl-CoA = (E)-cinnamyl acetate + CoA. Functionally, involved in the biosynthesis of benzyl acetate, a major constituent of the floral scent. Can use benzylalcohol, cinnamylalcohol, 3-cis-hexene-1-ol or heptanol as substrates. Has some activity with 2-phenylethanol and 2-naphtalene-ethanol, but no activity with linalool, 2-hydroxybenzylalcohol, 3-hydroxybenzylalcohol or 4-hydroxybenzylalcohol. This chain is Acetyl-CoA-benzylalcohol acetyltransferase (BEAT), found in Clarkia breweri (Fairy fans).